The chain runs to 422 residues: Tyrosine--tRNA ligase 1 (422 aa).

L-tyrosine is bound at residue Y36. The short motif at 41 to 50 is the 'HIGH' region element; the sequence is PTAGSLHIGH. 2 residues coordinate L-tyrosine: Y173 and Q177. The 'KMSKS' region motif lies at 233–237; sequence KFGKT. K236 provides a ligand contact to ATP. Residues 355–419 enclose the S4 RNA-binding domain; sequence SDVVTLLLET…GKKQFAMVKL (65 aa).

This sequence belongs to the class-I aminoacyl-tRNA synthetase family. TyrS type 1 subfamily. As to quaternary structure, homodimer.

The protein localises to the cytoplasm. The catalysed reaction is tRNA(Tyr) + L-tyrosine + ATP = L-tyrosyl-tRNA(Tyr) + AMP + diphosphate + H(+). Catalyzes the attachment of tyrosine to tRNA(Tyr) in a two-step reaction: tyrosine is first activated by ATP to form Tyr-AMP and then transferred to the acceptor end of tRNA(Tyr). This chain is Tyrosine--tRNA ligase 1, found in Vibrio vulnificus (strain CMCP6).